Reading from the N-terminus, the 275-residue chain is Undecaprenyl-diphosphatase 2 (275 aa).

Transmembrane regions (helical) follow at residues 48–68 (NAYV…ALLF), 90–110 (GLTL…GLLF), 117–137 (IFHV…MIAA), 154–174 (ISYK…WPGF), 195–215 (ANFT…LSLI), 223–243 (ISLL…SLVV), and 254–274 (IKLV…LFLF).

The protein belongs to the UppP family.

Its subcellular location is the cell membrane. The enzyme catalyses di-trans,octa-cis-undecaprenyl diphosphate + H2O = di-trans,octa-cis-undecaprenyl phosphate + phosphate + H(+). Catalyzes the dephosphorylation of undecaprenyl diphosphate (UPP). Confers resistance to bacitracin. This Shouchella clausii (strain KSM-K16) (Alkalihalobacillus clausii) protein is Undecaprenyl-diphosphatase 2.